We begin with the raw amino-acid sequence, 224 residues long: Small ribosomal subunit protein uS3 (224 aa).

The 69-residue stretch at 38-106 (IRKFISEKLK…QVHINIVEIK (69 aa)) folds into the KH type-2 domain.

This sequence belongs to the universal ribosomal protein uS3 family. Part of the 30S ribosomal subunit. Forms a tight complex with proteins S10 and S14.

Its function is as follows. Binds the lower part of the 30S subunit head. Binds mRNA in the 70S ribosome, positioning it for translation. The protein is Small ribosomal subunit protein uS3 of Lactobacillus acidophilus (strain ATCC 700396 / NCK56 / N2 / NCFM).